Consider the following 424-residue polypeptide: MLFERARGVFPGGVNSPARALKHLAAPLVANGASGPYLYTDRGRLVDYCMAFGAIILGHAHPRVKNAVAKQLERGWIYALLTEEEVAYAERIKAHVPSIEKMRIVNSGTEATMNAVRLARGYTRRDVIIKFDGNFHGSHDYVLVKAGSGAATWGVPTSAGVPQDVIKLTAVVPYNDVDAFVKAVREVGGRLAAVIVEPIAANYGLIIPDREFIKALREETERAGALLIFDEVVTGFRVGLSGAQGHFGVRPDLTTLGKVVGGGFPIGIFGGRADVMDMVAPSGPVYNAGTYNAHPVSVAAGLAVVEELERGEPYKIANEAAERLARGIEDIAGRVGFDVVVKQIASMFQLYFRRGDVKTPQDVRESDERLYLKLHELAIKHGVYLAPSQYETNFTSAAHTRDVVETTLAALEKAFTELKSQVGK.

N6-(pyridoxal phosphate)lysine is present on K258.

Belongs to the class-III pyridoxal-phosphate-dependent aminotransferase family. HemL subfamily. Requires pyridoxal 5'-phosphate as cofactor.

It localises to the cytoplasm. It carries out the reaction (S)-4-amino-5-oxopentanoate = 5-aminolevulinate. It participates in porphyrin-containing compound metabolism; protoporphyrin-IX biosynthesis; 5-aminolevulinate from L-glutamyl-tRNA(Glu): step 2/2. This is Glutamate-1-semialdehyde 2,1-aminomutase from Pyrobaculum neutrophilum (strain DSM 2338 / JCM 9278 / NBRC 100436 / V24Sta) (Thermoproteus neutrophilus).